The primary structure comprises 972 residues: Macrophage colony-stimulating factor 1 receptor (972 aa).

The signal sequence occupies residues 1–19; that stretch reads MGPGVLLLLLVATAWHGQG. Over 20-517 the chain is Extracellular; the sequence is IPVIEPSVPE…HPPDEFLFTP (498 aa). 5 consecutive Ig-like C2-type domains span residues 21 to 104, 107 to 197, 203 to 290, 299 to 399, and 402 to 502; these read PVIE…VKDP, PWNV…KVQK, PALT…HSTS, AYLN…LTLR, and PEVS…IPIS. Disulfide bonds link Cys42-Cys84, Cys127-Cys177, and Cys224-Cys278. Residues Asn45, Asn73, Asn153, Asn240, Asn275, Asn302, Asn335, Asn353, Asn412, Asn428, and Asn480 are each glycosylated (N-linked (GlcNAc...) asparagine). An intrachain disulfide couples Cys419 to Cys485. Residues 518-538 traverse the membrane as a helical segment; the sequence is VVVACMSIMALLLLLLLLLLY. The Cytoplasmic segment spans residues 539 to 972; that stretch reads KYKQKPKYQV…LLQPNNYQFC (434 aa). The interval 542-574 is regulatory juxtamembrane domain; sequence QKPKYQVRWKIIESYEGNSYTFIDPTQLPYNEK. Residues Tyr546 and Tyr561 each carry the phosphotyrosine; by autocatalysis modification. In terms of domain architecture, Protein kinase spans 582-910; the sequence is LQFGKTLGAG…PTFQQICSFL (329 aa). ATP is bound by residues 588-596 and Lys616; that span reads LGAGAFGKV. Phosphotyrosine; by autocatalysis occurs at positions 699 and 708. The residue at position 713 (Ser713) is a Phosphoserine. Tyr723 carries the post-translational modification Phosphotyrosine; by autocatalysis. Catalysis depends on Asp778, which acts as the Proton acceptor. The interval 796–818 is activation loop; it reads DFGLARDIMNDSNYIVKGNARLP. Phosphotyrosine; by autocatalysis is present on residues Tyr809 and Tyr923. The disordered stretch occupies residues 918–950; it reads RRERDYTNLPSSSRSGGSGSSSSELEEESSSEH. Residues 928 to 940 show a composition bias toward low complexity; it reads SSSRSGGSGSSSS. Tyr969 carries the phosphotyrosine; by autocatalysis modification.

The protein belongs to the protein kinase superfamily. Tyr protein kinase family. CSF-1/PDGF receptor subfamily. Interacts with INPPL1/SHIP2 and THOC5. Monomer. Homodimer. Interacts with CSF1 and IL34. Interaction with dimeric CSF1 or IL34 leads to receptor homodimerization. Interacts (tyrosine phosphorylated) with PLCG2 (via SH2 domain). Interacts (tyrosine phosphorylated) with PIK3R1 (via SH2 domain). Interacts (tyrosine phosphorylated) with FYN, YES1 and SRC (via SH2 domain). Interacts (tyrosine phosphorylated) with CBL, GRB2 and SLA2. In terms of processing, autophosphorylated in response to CSF1 or IL34 binding. Phosphorylation at Tyr-561 is important for normal down-regulation of signaling by ubiquitination, internalization and degradation. Phosphorylation at Tyr-561 and Tyr-809 is important for interaction with SRC family members, including FYN, YES1 and SRC, and for subsequent activation of these protein kinases. Phosphorylation at Tyr-699 and Tyr-923 is important for interaction with GRB2. Phosphorylation at Tyr-723 is important for interaction with PIK3R1. Phosphorylation at Tyr-708 is important for normal receptor degradation. Phosphorylation at Tyr-723 and Tyr-809 is important for interaction with PLCG2. Phosphorylation at Tyr-969 is important for interaction with CBL. Dephosphorylation by PTPN2 negatively regulates downstream signaling and macrophage differentiation. Ubiquitinated. Becomes rapidly polyubiquitinated after autophosphorylation, leading to its degradation. As to expression, expressed in bone marrow and in differentiated blood mononuclear cells.

The protein localises to the cell membrane. The catalysed reaction is L-tyrosyl-[protein] + ATP = O-phospho-L-tyrosyl-[protein] + ADP + H(+). Its activity is regulated as follows. Present in an inactive conformation in the absence of bound ligand. CSF1 or IL34 binding leads to dimerization and activation by autophosphorylation on tyrosine residues. Inhibited by imatinib/STI-571 (Gleevec), dasatinib, sunitinib/SU11248, lestaurtinib/CEP-701, midostaurin/PKC-412, Ki20227, linifanib/ABT-869, Axitinib/AG013736, sorafenib/BAY 43-9006 and GW2580. Its function is as follows. Tyrosine-protein kinase that acts as a cell-surface receptor for CSF1 and IL34 and plays an essential role in the regulation of survival, proliferation and differentiation of hematopoietic precursor cells, especially mononuclear phagocytes, such as macrophages and monocytes. Promotes the release of pro-inflammatory chemokines in response to IL34 and CSF1, and thereby plays an important role in innate immunity and in inflammatory processes. Plays an important role in the regulation of osteoclast proliferation and differentiation, the regulation of bone resorption, and is required for normal bone and tooth development. Required for normal male and female fertility, and for normal development of milk ducts and acinar structures in the mammary gland during pregnancy. Promotes reorganization of the actin cytoskeleton, regulates formation of membrane ruffles, cell adhesion and cell migration, and promotes cancer cell invasion. Activates several signaling pathways in response to ligand binding, including the ERK1/2 and the JNK pathway. Phosphorylates PIK3R1, PLCG2, GRB2, SLA2 and CBL. Activation of PLCG2 leads to the production of the cellular signaling molecules diacylglycerol and inositol 1,4,5-trisphosphate, that then lead to the activation of protein kinase C family members, especially PRKCD. Phosphorylation of PIK3R1, the regulatory subunit of phosphatidylinositol 3-kinase, leads to activation of the AKT1 signaling pathway. Activated CSF1R also mediates activation of the MAP kinases MAPK1/ERK2 and/or MAPK3/ERK1, and of the SRC family kinases SRC, FYN and YES1. Activated CSF1R transmits signals both via proteins that directly interact with phosphorylated tyrosine residues in its intracellular domain, or via adapter proteins, such as GRB2. Promotes activation of STAT family members STAT3, STAT5A and/or STAT5B. Promotes tyrosine phosphorylation of SHC1 and INPP5D/SHIP-1. Receptor signaling is down-regulated by protein phosphatases, such as INPP5D/SHIP-1, that dephosphorylate the receptor and its downstream effectors, and by rapid internalization of the activated receptor. In the central nervous system, may play a role in the development of microglia macrophages. The chain is Macrophage colony-stimulating factor 1 receptor (CSF1R) from Homo sapiens (Human).